The primary structure comprises 361 residues: tRNA/tmRNA (uracil-C(5))-methyltransferase (361 aa).

Gln185, Tyr213, Asn218, Glu234, and Asp294 together coordinate S-adenosyl-L-methionine. Residue Cys319 is the Nucleophile of the active site. Glu353 acts as the Proton acceptor in catalysis.

It belongs to the class I-like SAM-binding methyltransferase superfamily. RNA M5U methyltransferase family. TrmA subfamily.

The catalysed reaction is uridine(54) in tRNA + S-adenosyl-L-methionine = 5-methyluridine(54) in tRNA + S-adenosyl-L-homocysteine + H(+). It carries out the reaction uridine(341) in tmRNA + S-adenosyl-L-methionine = 5-methyluridine(341) in tmRNA + S-adenosyl-L-homocysteine + H(+). Its function is as follows. Dual-specificity methyltransferase that catalyzes the formation of 5-methyluridine at position 54 (m5U54) in all tRNAs, and that of position 341 (m5U341) in tmRNA (transfer-mRNA). The polypeptide is tRNA/tmRNA (uracil-C(5))-methyltransferase (Azotobacter vinelandii (strain DJ / ATCC BAA-1303)).